A 400-amino-acid polypeptide reads, in one-letter code: Forkhead box protein Q1 (400 aa).

The disordered stretch occupies residues 1-112; it reads MKLEVFVPRA…EGARSKPYTR (112 aa). Residues 32 to 54 show a composition bias toward low complexity; that stretch reads LSAAGDDSLGSDGDCAANSPAAG. Gly residues-rich tracts occupy residues 55–66 and 95–104; these read SGAGDLEGGGGE and CAGGVGGGEG. A DNA-binding region (fork-head) is located at residues 115–210; it reads KPPYSYIALI…ADGVFRRRRK (96 aa). The tract at residues 213–264 is disordered; that stretch reads SHRTTVSASGLRPEEAPPGPAGTPQPAPAARSSPIARSPARQEERSSPASKF. A compositionally biased stretch (pro residues) spans 228–239; that stretch reads APPGPAGTPQPA. Residues 240–251 show a composition bias toward low complexity; that stretch reads PAARSSPIARSP.

As to expression, expressed in kidney and stomach. Expression in the outer medulla of the kidney and the transitional epithelium. Expressed in the hair follicle medulla.

The protein localises to the nucleus. In terms of biological role, plays a role in hair follicle differentiation. The chain is Forkhead box protein Q1 (Foxq1) from Mus musculus (Mouse).